Reading from the N-terminus, the 2302-residue chain is Phosphatidylinositol phosphatase PTPRQ (2302 aa).

A signal peptide spans 1-18 (MMDFHFSFLFLLIGTSES). The Extracellular segment spans residues 19-1908 (QVDVSSSFDG…GEGLSERTVE (1890 aa)). N-linked (GlcNAc...) asparagine glycosylation occurs at Asn-54. 17 Fibronectin type-III domains span residues 60-155 (PPVF…TAES), 159-254 (KVVN…SSST), 310-398 (PPQN…PPDV), 401-501 (AVFD…PHND), 474-566 (GFYE…TVRT), 570-665 (VPSS…TPED), 670-759 (SPQD…TSET), 764-854 (APEN…TEED), 859-948 (PPQN…TPEG), 953-1053 (PPND…TDQD), 1058-1151 (PVGN…TEED), 1156-1243 (PPII…TDES), 1248-1341 (PPQN…TQES), 1345-1431 (AVRN…LPET), 1435-1539 (APTN…TLPG), 1544-1642 (PPEN…TLES), and 1647-1748 (PPNN…IKAP). N-linked (GlcNAc...) asparagine glycosylation is found at Asn-162, Asn-169, Asn-318, Asn-354, and Asn-389. N-linked (GlcNAc...) asparagine glycosylation is found at Asn-733 and Asn-746. Asn-904, Asn-998, Asn-1010, and Asn-1040 each carry an N-linked (GlcNAc...) asparagine glycan. N-linked (GlcNAc...) asparagine glycosylation is found at Asn-1251 and Asn-1256. The N-linked (GlcNAc...) asparagine glycan is linked to Asn-1805. A helical transmembrane segment spans residues 1909–1929 (IILSVTLCILSIILLGTAIFA). Residues 1930-2302 (FVRIRQKQKE…VELEWEETTM (373 aa)) lie on the Cytoplasmic side of the membrane. Residues 2006–2262 (FQEEFSELPK…IFLHQCILDL (257 aa)) enclose the Tyrosine-protein phosphatase domain. Cys-2203 functions as the Phosphocysteine intermediate in the catalytic mechanism.

The protein belongs to the protein-tyrosine phosphatase family. Receptor class 2A subfamily. As to quaternary structure, interacts with TPRN. TPRN, CLIC5 and PTPQR form concentric rings at the base of stereocilia and may form a complex.

It localises to the cell projection. The protein localises to the stereocilium. The protein resides in the apical cell membrane. Its subcellular location is the basal cell membrane. The enzyme catalyses a 1,2-diacyl-sn-glycero-3-phospho-(1D-myo-inositol-3,4,5-trisphosphate) + H2O = a 1,2-diacyl-sn-glycero-3-phospho-(1D-myo-inositol-4,5-bisphosphate) + phosphate. It catalyses the reaction a 1,2-diacyl-sn-glycero-3-phospho-(1D-myo-inositol-3,4,5-trisphosphate) + H2O = a 1,2-diacyl-sn-glycero-3-phospho-(1D-myo-inositol-3,4-bisphosphate) + phosphate. The catalysed reaction is a 1,2-diacyl-sn-glycero-3-phospho-(1D-myo-inositol-3,5-bisphosphate) + H2O = a 1,2-diacyl-sn-glycero-3-phospho-(1D-myo-inositol-5-phosphate) + phosphate. It carries out the reaction a 1,2-diacyl-sn-glycero-3-phospho-(1D-myo-inositol-3,5-bisphosphate) + H2O = a 1,2-diacyl-sn-glycero-3-phospho-(1D-myo-inositol-3-phosphate) + phosphate. The enzyme catalyses a 1,2-diacyl-sn-glycero-3-phospho-(1D-myo-inositol-4,5-bisphosphate) + H2O = a 1,2-diacyl-sn-glycero-3-phospho-(1D-myo-inositol 4-phosphate) + phosphate. Its function is as follows. Dephosphorylates phosphatidylinositol phosphates, such as phosphatidylinositol 3,4,5-trisphosphate (PIP3) and phosphatidylinositol 3,5-diphosphates, with preference for PIP3. Phosphate can be hydrolyzed from the D3 and D5 positions in the inositol ring. Has low tyrosine-protein phosphatase activity in vitro; however, the relevance of such activity in vivo is unclear. Plays an important role in adipogenesis of mesenchymal stem cells (MSCs). Regulates the phosphorylation state of AKT1 by regulating the levels of PIP3 level in MSCs and preadipocyte cells. Required for hair bundle maturation, a process that enables hair cells to detect and transmit sound and balance signals effectively, therefore affecting auditory function. May act by regulating the level of phosphatidylinositol 4,5-bisphosphate (PIP2) level in the basal region of hair bundles. The protein is Phosphatidylinositol phosphatase PTPRQ (Ptprq) of Rattus norvegicus (Rat).